The chain runs to 300 residues: Homoserine kinase (300 aa).

82–92 serves as a coordination point for ATP; it reads RPGSGLGSSAA.

This sequence belongs to the GHMP kinase family. Homoserine kinase subfamily.

The protein localises to the cytoplasm. It carries out the reaction L-homoserine + ATP = O-phospho-L-homoserine + ADP + H(+). It functions in the pathway amino-acid biosynthesis; L-threonine biosynthesis; L-threonine from L-aspartate: step 4/5. Its function is as follows. Catalyzes the ATP-dependent phosphorylation of L-homoserine to L-homoserine phosphate. The chain is Homoserine kinase from Methanocella arvoryzae (strain DSM 22066 / NBRC 105507 / MRE50).